The chain runs to 555 residues: Serine/threonine-protein kinase AGC1-7 (555 aa).

The interval 1–126 is disordered; the sequence is MLTKPGKKLD…PSKPHTGGDI (126 aa). Basic and acidic residues-rich tracts occupy residues 7 to 16 and 35 to 54; these read KKLDSSESTH and PRKE…DNLI. Low complexity predominate over residues 84–118; the sequence is SQSNLNTKPNNNNSNNNSNMSSRSNSIESTSSNPS. A Protein kinase domain is found at 146–480; the sequence is FRLLKRLGYG…ATEIKQHPFF (335 aa). ATP contacts are provided by residues 152–160 and Lys-175; that span reads LGYGDIGSV. The active-site Proton acceptor is the Asp-271. One can recognise an AGC-kinase C-terminal domain in the interval 481 to 555; it reads EGVNWALIRS…DPDYIDFEYF (75 aa). Residues 514–547 form a disordered region; the sequence is AAVDGGGKKNNNGAGGGCSTGGGDNKPNGDCNDP. Gly residues predominate over residues 526-537; it reads GAGGGCSTGGGD.

This sequence belongs to the protein kinase superfamily. AGC Ser/Thr protein kinase family. As to quaternary structure, interacts with PDPK1/PDK1. In terms of processing, autophosphorylated and phosphorylated by PDPK1/PDK1. Specifically expressed in pollen grains.

The protein localises to the cytoplasm. It catalyses the reaction L-seryl-[protein] + ATP = O-phospho-L-seryl-[protein] + ADP + H(+). The enzyme catalyses L-threonyl-[protein] + ATP = O-phospho-L-threonyl-[protein] + ADP + H(+). With respect to regulation, activated by PDPK1/PDK1. In terms of biological role, functions redudantly with AGC1-5 as signaling component in the pollen tube. Required for polarized growth of pollen tubes. The protein is Serine/threonine-protein kinase AGC1-7 of Arabidopsis thaliana (Mouse-ear cress).